The sequence spans 331 residues: Probable allantoicase (331 aa).

This sequence belongs to the allantoicase family.

The enzyme catalyses allantoate + H2O = (S)-ureidoglycolate + urea. It functions in the pathway nitrogen metabolism; (S)-allantoin degradation; (S)-ureidoglycolate from allantoate (aminidohydrolase route): step 1/1. This chain is Probable allantoicase, found in Pseudomonas savastanoi pv. phaseolicola (strain 1448A / Race 6) (Pseudomonas syringae pv. phaseolicola (strain 1448A / Race 6)).